The following is a 171-amino-acid chain: Putative phosphoesterase ABC1741 (171 aa).

His-34 functions as the Proton donor in the catalytic mechanism. Short sequence motifs (HXTX) lie at residues His-34 to Leu-37 and His-116 to Ile-119. His-116 functions as the Proton acceptor in the catalytic mechanism.

It belongs to the 2H phosphoesterase superfamily. YjcG family.

This chain is Putative phosphoesterase ABC1741, found in Shouchella clausii (strain KSM-K16) (Alkalihalobacillus clausii).